A 31-amino-acid chain; its full sequence is Cytochrome b6-f complex subunit 6 (31 aa).

A helical membrane pass occupies residues 4–26 (ITSYFGFLLAASTITSALLIGLS).

Belongs to the PetL family. In terms of assembly, the 4 large subunits of the cytochrome b6-f complex are cytochrome b6, subunit IV (17 kDa polypeptide, PetD), cytochrome f and the Rieske protein, while the 4 small subunits are PetG, PetL, PetM and PetN. The complex functions as a dimer.

It localises to the plastid. The protein localises to the chloroplast thylakoid membrane. In terms of biological role, component of the cytochrome b6-f complex, which mediates electron transfer between photosystem II (PSII) and photosystem I (PSI), cyclic electron flow around PSI, and state transitions. PetL is important for photoautotrophic growth as well as for electron transfer efficiency and stability of the cytochrome b6-f complex. In Chloranthus spicatus (Chulantree), this protein is Cytochrome b6-f complex subunit 6.